The primary structure comprises 457 residues: 4-hydroxybenzoate transporter PcaK (457 aa).

Topologically, residues 1 to 34 (MPKEANMASQDYATQRSSLDAQALINDAPLSRYQ) are cytoplasmic. Residues 35–55 (WLIAIVCFLIVFVDGIDTAAM) form a helical membrane-spanning segment. At 56–72 (GFIAPALAQDWGVDRSQ) the chain is on the periplasmic side. Residues 73 to 93 (LGPVMSAALGGMIIGALVSGP) traverse the membrane as a helical segment. Residues 94–101 (TADRFGRK) are Cytoplasmic-facing. Residues 102-122 (IVLSMSMLVFGGFTLACAYST) form a helical membrane-spanning segment. The Periplasmic segment spans residues 123–128 (NLDSLV). A helical membrane pass occupies residues 129-149 (IFRFLTGIGLGAAMPNATTLF). Residues 150–168 (SEYCPARIRSLLVTCMFCG) are Cytoplasmic-facing. Residues 169–189 (YNLGMAIGGFISSWLIPAFGW) form a helical membrane-spanning segment. Residues 190-191 (HS) are Periplasmic-facing. The chain crosses the membrane as a helical span at residues 192-212 (LFLLGGWAPLILMLLVIFFLP). At 213 to 274 (ESYRFLIVKG…LFSAKYVKGT (62 aa)) the chain is on the cytoplasmic side. Residues 275-295 (VLLWVTYFMGLVMIYLLTSWL) form a helical membrane-spanning segment. Residues 296-310 (PTLMRETGASLERAA) are Periplasmic-facing. A helical membrane pass occupies residues 311–331 (FLGGLFQFGGVLSALFIGWAM). The Cytoplasmic segment spans residues 332–338 (DRFNPNR). A helical transmembrane segment spans residues 339–359 (IIAGFYLAAGIFAVIVGQSLS). Residues 360 to 363 (NPTL) are Periplasmic-facing. The helical transmembrane segment at 364 to 384 (LALFILCAGIAVNGAQSSMPV) threads the bilayer. The Cytoplasmic portion of the chain corresponds to 385–400 (LSARFYPTQCRATGVA). Residues 401–421 (WMSGIGRFGAVFGAWIGAVLL) traverse the membrane as a helical segment. Topologically, residues 422-426 (GNNWS) are periplasmic. Residues 427-447 (FTMILSMLIIPAAAAAIAIFV) traverse the membrane as a helical segment. The Cytoplasmic portion of the chain corresponds to 448–457 (KSLVAHTDAT).

It belongs to the major facilitator superfamily. Aromatic acid:H(+) symporter (AAHS) (TC 2.A.1.15) family. Homotrimer.

It is found in the cell inner membrane. Its function is as follows. Uptake of 4-hydroxybenzoate (4-HB). Can also transport a variety of aromatic acids with hydroxyl substitutions at the 2-, 3- and 4-positions, such as salicylate, 2,4-dihydroxybenzoate, protocatechuate, 3-hydroxybenzoate, vanillate and gentisate. In Acinetobacter baylyi (strain ATCC 33305 / BD413 / ADP1), this protein is 4-hydroxybenzoate transporter PcaK.